Consider the following 345-residue polypeptide: Tetraacyldisaccharide 4'-kinase (345 aa).

61–68 (TAGGTGKT) serves as a coordination point for ATP.

The protein belongs to the LpxK family.

It carries out the reaction a lipid A disaccharide + ATP = a lipid IVA + ADP + H(+). Its pathway is glycolipid biosynthesis; lipid IV(A) biosynthesis; lipid IV(A) from (3R)-3-hydroxytetradecanoyl-[acyl-carrier-protein] and UDP-N-acetyl-alpha-D-glucosamine: step 6/6. Its function is as follows. Transfers the gamma-phosphate of ATP to the 4'-position of a tetraacyldisaccharide 1-phosphate intermediate (termed DS-1-P) to form tetraacyldisaccharide 1,4'-bis-phosphate (lipid IVA). This is Tetraacyldisaccharide 4'-kinase from Xanthomonas axonopodis pv. citri (strain 306).